A 239-amino-acid chain; its full sequence is Cysteine-rich venom protein (239 aa).

Positions 1–19 (MIAFLVLPILAAVLQQSSG) are cleaved as a signal peptide. One can recognise an SCP domain in the interval 39 to 166 (DLHNSLRRSV…EYKYFYVCQY (128 aa)). Disulfide bonds link C75–C153, C92–C167, C148–C164, C186–C193, C189–C198, C202–C234, C211–C228, and C219–C232. The 33-residue stretch at 202-234 (CTHEDKFTNCKDLVKQGCNNNYLKTNCPASCSC) folds into the ShKT domain.

Belongs to the CRISP family. Expressed by the venom gland.

Its subcellular location is the secreted. In terms of biological role, blocks contraction of smooth muscle elicited by high potassium-induced depolarization, but does not block caffeine-stimulated contraction. May target voltage-gated calcium channels in smooth muscle. The sequence is that of Cysteine-rich venom protein from Vipera berus (Common European adder).